Reading from the N-terminus, the 349-residue chain is Nicotinate-nucleotide--dimethylbenzimidazole phosphoribosyltransferase (349 aa).

The active-site Proton acceptor is glutamate 316.

This sequence belongs to the CobT family.

It catalyses the reaction 5,6-dimethylbenzimidazole + nicotinate beta-D-ribonucleotide = alpha-ribazole 5'-phosphate + nicotinate + H(+). It participates in nucleoside biosynthesis; alpha-ribazole biosynthesis; alpha-ribazole from 5,6-dimethylbenzimidazole: step 1/2. In terms of biological role, catalyzes the synthesis of alpha-ribazole-5'-phosphate from nicotinate mononucleotide (NAMN) and 5,6-dimethylbenzimidazole (DMB). The sequence is that of Nicotinate-nucleotide--dimethylbenzimidazole phosphoribosyltransferase from Photorhabdus laumondii subsp. laumondii (strain DSM 15139 / CIP 105565 / TT01) (Photorhabdus luminescens subsp. laumondii).